A 227-amino-acid chain; its full sequence is Putative N-acetylmannosamine-6-phosphate 2-epimerase (227 aa).

The protein belongs to the NanE family.

It carries out the reaction an N-acyl-D-glucosamine 6-phosphate = an N-acyl-D-mannosamine 6-phosphate. It participates in amino-sugar metabolism; N-acetylneuraminate degradation; D-fructose 6-phosphate from N-acetylneuraminate: step 3/5. Functionally, converts N-acetylmannosamine-6-phosphate (ManNAc-6-P) to N-acetylglucosamine-6-phosphate (GlcNAc-6-P). This is Putative N-acetylmannosamine-6-phosphate 2-epimerase from Shouchella clausii (strain KSM-K16) (Alkalihalobacillus clausii).